The following is a 218-amino-acid chain: Phosphoribosylformylglycinamidine synthase subunit PurQ (218 aa).

Residues 2 to 218 form the Glutamine amidotransferase type-1 domain; the sequence is SIAVLRFPGT…GARMLRGLAC (217 aa). The Nucleophile role is filled by C86. Active-site residues include H195 and E197.

Part of the FGAM synthase complex composed of 1 PurL, 1 PurQ and 2 PurS subunits.

It localises to the cytoplasm. It carries out the reaction N(2)-formyl-N(1)-(5-phospho-beta-D-ribosyl)glycinamide + L-glutamine + ATP + H2O = 2-formamido-N(1)-(5-O-phospho-beta-D-ribosyl)acetamidine + L-glutamate + ADP + phosphate + H(+). The catalysed reaction is L-glutamine + H2O = L-glutamate + NH4(+). It participates in purine metabolism; IMP biosynthesis via de novo pathway; 5-amino-1-(5-phospho-D-ribosyl)imidazole from N(2)-formyl-N(1)-(5-phospho-D-ribosyl)glycinamide: step 1/2. Its function is as follows. Part of the phosphoribosylformylglycinamidine synthase complex involved in the purines biosynthetic pathway. Catalyzes the ATP-dependent conversion of formylglycinamide ribonucleotide (FGAR) and glutamine to yield formylglycinamidine ribonucleotide (FGAM) and glutamate. The FGAM synthase complex is composed of three subunits. PurQ produces an ammonia molecule by converting glutamine to glutamate. PurL transfers the ammonia molecule to FGAR to form FGAM in an ATP-dependent manner. PurS interacts with PurQ and PurL and is thought to assist in the transfer of the ammonia molecule from PurQ to PurL. In Wolinella succinogenes (strain ATCC 29543 / DSM 1740 / CCUG 13145 / JCM 31913 / LMG 7466 / NCTC 11488 / FDC 602W) (Vibrio succinogenes), this protein is Phosphoribosylformylglycinamidine synthase subunit PurQ.